Here is a 150-residue protein sequence, read N- to C-terminus: Aspartate 1-decarboxylase 2 (150 aa).

Ser-24 serves as the catalytic Schiff-base intermediate with substrate; via pyruvic acid. Residue Ser-24 is modified to Pyruvic acid (Ser). A substrate-binding site is contributed by Thr-56. Tyr-57 acts as the Proton donor in catalysis. Substrate is bound at residue 72–74; it reads GAA.

This sequence belongs to the PanD family. As to quaternary structure, heterooctamer of four alpha and four beta subunits. Pyruvate serves as cofactor. Is synthesized initially as an inactive proenzyme, which is activated by self-cleavage at a specific serine bond to produce a beta-subunit with a hydroxyl group at its C-terminus and an alpha-subunit with a pyruvoyl group at its N-terminus.

The protein resides in the cytoplasm. The catalysed reaction is L-aspartate + H(+) = beta-alanine + CO2. It participates in cofactor biosynthesis; (R)-pantothenate biosynthesis; beta-alanine from L-aspartate: step 1/1. Its function is as follows. Catalyzes the pyruvoyl-dependent decarboxylation of aspartate to produce beta-alanine. The chain is Aspartate 1-decarboxylase 2 from Mesorhizobium japonicum (strain LMG 29417 / CECT 9101 / MAFF 303099) (Mesorhizobium loti (strain MAFF 303099)).